The primary structure comprises 116 residues: NADPH-dependent 7-cyano-7-deazaguanine reductase (116 aa).

The active-site Thioimide intermediate is cysteine 31. The Proton donor role is filled by aspartate 38. Substrate-binding positions include 53-55 (VEL) and 72-73 (YE).

The protein belongs to the GTP cyclohydrolase I family. QueF type 1 subfamily.

Its subcellular location is the cytoplasm. The catalysed reaction is 7-aminomethyl-7-carbaguanine + 2 NADP(+) = 7-cyano-7-deazaguanine + 2 NADPH + 3 H(+). Its pathway is tRNA modification; tRNA-queuosine biosynthesis. In terms of biological role, catalyzes the NADPH-dependent reduction of 7-cyano-7-deazaguanine (preQ0) to 7-aminomethyl-7-deazaguanine (preQ1). The protein is NADPH-dependent 7-cyano-7-deazaguanine reductase of Chlorobium chlorochromatii (strain CaD3).